The chain runs to 481 residues: uncharacterized protein (481 aa).

It belongs to the metallophosphoesterase superfamily.

This is an uncharacterized protein from Bacillus subtilis (strain 168).